A 379-amino-acid polypeptide reads, in one-letter code: Homoserine O-succinyltransferase (379 aa).

An AB hydrolase-1 domain is found at 51–360 (NAVLICHALS…DSPYGHDAFL (310 aa)). Residue serine 157 is the Nucleophile of the active site. Residue arginine 227 participates in substrate binding. Catalysis depends on residues aspartate 323 and histidine 356. Aspartate 357 serves as a coordination point for substrate.

It belongs to the AB hydrolase superfamily. MetX family. In terms of assembly, homodimer.

The protein localises to the cytoplasm. It carries out the reaction L-homoserine + succinyl-CoA = O-succinyl-L-homoserine + CoA. The protein operates within amino-acid biosynthesis; L-methionine biosynthesis via de novo pathway; O-succinyl-L-homoserine from L-homoserine: step 1/1. Its function is as follows. Transfers a succinyl group from succinyl-CoA to L-homoserine, forming succinyl-L-homoserine. This Pseudomonas entomophila (strain L48) protein is Homoserine O-succinyltransferase.